The following is a 266-amino-acid chain: tRNA (guanine-N(7)-)-methyltransferase (266 aa).

The tract at residues methionine 1–arginine 32 is disordered. S-adenosyl-L-methionine-binding residues include glutamate 96, glutamate 121, aspartate 148, and aspartate 171. Aspartate 171 is a catalytic residue. Residues lysine 175 and aspartate 207 each contribute to the substrate site.

It belongs to the class I-like SAM-binding methyltransferase superfamily. TrmB family.

The catalysed reaction is guanosine(46) in tRNA + S-adenosyl-L-methionine = N(7)-methylguanosine(46) in tRNA + S-adenosyl-L-homocysteine. The protein operates within tRNA modification; N(7)-methylguanine-tRNA biosynthesis. Functionally, catalyzes the formation of N(7)-methylguanine at position 46 (m7G46) in tRNA. This is tRNA (guanine-N(7)-)-methyltransferase from Mycolicibacterium vanbaalenii (strain DSM 7251 / JCM 13017 / BCRC 16820 / KCTC 9966 / NRRL B-24157 / PYR-1) (Mycobacterium vanbaalenii).